Here is a 425-residue protein sequence, read N- to C-terminus: Proteinase-activated receptor 1 (425 aa).

Residues M1–S21 form the signal peptide. A propeptide spans A22–R41 (removed for receptor activation). 3 N-linked (GlcNAc...) asparagine glycosylation sites follow: N35, N62, and N75. Topologically, residues S42–T102 are extracellular. Residues L103 to I128 traverse the membrane as a helical segment. Residues L129–A137 are Cytoplasmic-facing. Residues V138 to F157 traverse the membrane as a helical segment. The Extracellular portion of the chain corresponds to K158–R176. Cysteines 175 and 254 form a disulfide. The chain crosses the membrane as a helical span at residues F177–I198. Over D199 to R218 the chain is Cytoplasmic. A helical membrane pass occupies residues A219 to L239. Residues K240–A268 are Extracellular-facing. 2 N-linked (GlcNAc...) asparagine glycosylation sites follow: N250 and N259. Residues Y269–V288 form a helical membrane-spanning segment. Over C289 to A311 the chain is Cytoplasmic. A helical membrane pass occupies residues L312 to I334. Over A335–Y350 the chain is Extracellular. A helical membrane pass occupies residues F351–A374. At S375–T425 the chain is on the cytoplasmic side. S418 bears the Phosphoserine mark.

Belongs to the G-protein coupled receptor 1 family. Proteolytic cleavage by thrombin generates a new N-terminus that functions as a tethered ligand. Also proteolytically cleaved by cathepsin CTSG. Cleavage at 41-Arg-|-Ser-42 by CTSG results in receptor activation while cleavage at 55-Phe-|-Trp-56 results in inhibition of receptor activation. Post-translationally, phosphorylated in the C-terminal tail; probably mediating desensitization prior to the uncoupling and internalization of the receptor.

It is found in the cell membrane. Its function is as follows. High affinity receptor that binds the activated thrombin, leading to calcium release from intracellular stores. The thrombin-activated receptor signaling pathway is mediated through PTX-insensitive G proteins, activation of phospholipase C resulting in the production of 1D-myo-inositol 1,4,5-trisphosphate (InsP3) which binds to InsP3 receptors causing calcium release from the stores. In astrocytes, the calcium released into the cytosol allows the Ca(2+)-dependent release of L-glutamate into the synaptic cleft through BEST1, that targets the neuronal postsynaptic GRIN2A/NMDAR receptor resulting in the synaptic plasticity regulation. May play a role in platelets activation and in vascular development. Mediates up-regulation of pro-inflammatory cytokines, such as MCP-1/CCL2 and IL6, triggered by coagulation factor Xa (F10) in cardiac fibroblasts and umbilical vein endothelial cells. In Papio hamadryas (Hamadryas baboon), this protein is Proteinase-activated receptor 1.